A 128-amino-acid polypeptide reads, in one-letter code: Small ribosomal subunit protein uS11 (128 aa).

The protein belongs to the universal ribosomal protein uS11 family. Part of the 30S ribosomal subunit. Interacts with proteins S7 and S18. Binds to IF-3.

Located on the platform of the 30S subunit, it bridges several disparate RNA helices of the 16S rRNA. Forms part of the Shine-Dalgarno cleft in the 70S ribosome. The protein is Small ribosomal subunit protein uS11 of Wolbachia pipientis wMel.